Reading from the N-terminus, the 156-residue chain is Terrestric acid biosynthesis cluster protein E (156 aa).

The protein operates within secondary metabolite biosynthesis. Part of the tra gene cluster that produces terrestric acid. The clavatol biosynthesis cluster cla and the terrestric acid cluster tra are both involved in the production of peniphenones and penilactones. The non-reducing PKS claF is responsible for the formation of clavatol from successive condensations of 3 malonyl-CoA units, presumably with a simple acetyl-CoA starter unit, and 2 methylation steps. The esterase claE probably collaborates with claF by catalyzing the hydrolysis of ACP-bound acyl intermediates to free the ACP from stalled intermediates. The clavatol oxidase claD then converts clavatol to hydroxyclavatol. Spontaneous dehydration of hydroxyclavatol leads to the accumulation of the highly active ortho-quinone methide. On the other hand, the PKS-NRPS hybrid traA is involved in the formation of crustosic acid, with the help of traB and traD. The polyketide synthase module (PKS) of traA is responsible for the synthesis of the polyketide backbone via the condensation of an acetyl-CoA starter unit with 3 malonyl-CoA units. The downstream nonribosomal peptide synthetase (NRPS) module then amidates the carboxyl end of the polyketide with L-malic acid. Because traA lacks a designated enoylreductase (ER) domain, the required activity is provided the enoyl reductase traG. Crustosic acid undergoes decarboxylation and isomerization to the terrestric acid, catalyzed by the 2-oxoglutarate-dependent dioxygenase traH. Both acids are further converted to the 2 gamma-butyrolactones (R)-5-methyltetronic acid and (S)-5-carboxylmethyltetronic acid, with involvement of the cytochrome P450 monooxygenase claJ. Spontaneous addition of the methide to these gamma-butyrolactones leads to peniphenone D and penilactone D, which undergo again stereospecific attacking by methide to give penilactones A and B. TraE seems not to be involved in the biosynthesis of peniphenones and penilactones in the conditions used to study its function. The polypeptide is Terrestric acid biosynthesis cluster protein E (Penicillium crustosum (Blue mold fungus)).